A 508-amino-acid polypeptide reads, in one-letter code: Galactose-1-phosphate uridylyltransferase (508 aa).

The protein belongs to the galactose-1-phosphate uridylyltransferase type 2 family.

The protein localises to the cytoplasm. The catalysed reaction is alpha-D-galactose 1-phosphate + UDP-alpha-D-glucose = alpha-D-glucose 1-phosphate + UDP-alpha-D-galactose. It functions in the pathway carbohydrate metabolism; galactose metabolism. This chain is Galactose-1-phosphate uridylyltransferase (galT), found in Halalkalibacterium halodurans (strain ATCC BAA-125 / DSM 18197 / FERM 7344 / JCM 9153 / C-125) (Bacillus halodurans).